We begin with the raw amino-acid sequence, 535 residues long: Alpha-1,3-mannosyl-glycoprotein 4-beta-N-acetylglucosaminyltransferase A (535 aa).

Residues 1–6 (MRLRNG) lie on the Cytoplasmic side of the membrane. A helical; Signal-anchor for type II membrane protein transmembrane segment spans residues 7–27 (TVATVLVFITTFLSLSWYTAW). Residues 28–54 (QNGKEKLIAYQREFHALKERLRIAEHR) adopt a coiled-coil conformation. Residues 28–535 (QNGKEKLIAY…NEIHIKKMTN (508 aa)) are Lumenal-facing. N-linked (GlcNAc...) asparagine glycosylation is found at Asn77, Asn85, and Asn458.

This sequence belongs to the glycosyltransferase 54 family. Requires a divalent metal cation as cofactor. N-glycosylated.

It localises to the golgi apparatus membrane. The protein localises to the secreted. The enzyme catalyses N(4)-{beta-D-GlcNAc-(1-&gt;2)-alpha-D-Man-(1-&gt;3)-[beta-D-GlcNAc-(1-&gt;2)-alpha-D-Man-(1-&gt;6)]-beta-D-Man-(1-&gt;4)-beta-D-GlcNAc-(1-&gt;4)-beta-D-GlcNAc}-L-asparaginyl-[protein] + UDP-N-acetyl-alpha-D-glucosamine = N(4)-{beta-D-GlcNAc-(1-&gt;2)-[beta-D-GlcNAc-(1-&gt;4)]-alpha-D-Man-(1-&gt;3)-[beta-D-GlcNAc-(1-&gt;2)-alpha-D-Man-(1-&gt;6)]-beta-D-Man-(1-&gt;4)-beta-D-GlcNAc-(1-&gt;4)-beta-D-GlcNAc}-L-asparaginyl-[protein] + UDP + H(+). It catalyses the reaction an N(4)-{beta-D-GlcNAc-(1-&gt;2)-alpha-D-Man-(1-&gt;3)-[alpha-D-Man-(1-&gt;6)]-beta-D-Man-(1-&gt;4)-beta-D-GlcNAc-(1-&gt;4)-beta-D-GlcNAc}-L-asparaginyl-[protein] + UDP-N-acetyl-alpha-D-glucosamine = an N(4)-{beta-D-GlcNAc-(1-&gt;2)-[beta-D-GlcNAc-(1-&gt;4)]-alpha-D-Man-(1-&gt;3)-[alpha-D-Man-(1-&gt;6)]-beta-D-Man-(1-&gt;4)-beta-D-GlcNAc-(1-&gt;4)-beta-D-GlcNAc}-L-asparaginyl-[protein] + UDP + H(+). It carries out the reaction an N(4)-{beta-D-GlcNAc-(1-&gt;2)-alpha-D-Man-(1-&gt;3)-[beta-D-GlcNAc-(1-&gt;2)-[beta-D-GlcNAc-(1-&gt;6)]-alpha-D-Man-(1-&gt;6)]-beta-D-Man-(1-&gt;4)-beta-D-GlcNAc-(1-&gt;4)-beta-D-GlcNAc}-L-asparaginyl-[protein] + UDP-N-acetyl-alpha-D-glucosamine = an N(4)-{beta-D-GlcNAc-(1-&gt;2)-[beta-D-GlcNAc-(1-&gt;4)]-alpha-D-Man-(1-&gt;3)-[beta-D-GlcNAc-(1-&gt;2)-[beta-D-GlcNAc-(1-&gt;6)]-alpha-D-Man-(1-&gt;6)]-beta-D-Man-(1-&gt;4)-beta-D-GlcNAc-(1-&gt;4)-beta-D-GlcNAc}-L-asparaginyl-[protein] + UDP + H(+). The catalysed reaction is an N(4)-{beta-D-GlcNAc-(1-&gt;2)-alpha-D-Man-(1-&gt;3)-[beta-D-GlcNAc-(1-&gt;2)-alpha-D-Man-(1-&gt;6)]-beta-D-Man-(1-&gt;4)-beta-D-GlcNAc-(1-&gt;4)-[alpha-L-Fuc-(1-&gt;6)]-beta-D-GlcNAc}-L-asparaginyl-[protein] + UDP-N-acetyl-alpha-D-glucosamine = N(4)-{beta-D-GlcNAc-(1-&gt;2)-[beta-D-GlcNAc-(1-&gt;4)]-alpha-D-Man-(1-&gt;3)-[beta-D-GlcNAc-(1-&gt;2)-alpha-D-Man-(1-&gt;6)]-beta-D-Man-(1-&gt;4)-beta-D-GlcNAc-(1-&gt;4)-[alpha-L-Fuc-(1-&gt;6)]-beta-D-GlcNAc}-asparaginyl-[protein] + UDP + H(+). The enzyme catalyses an N(4)-{beta-D-GlcNAc-(1-&gt;2)-alpha-D-Man-(1-&gt;3)-[beta-D-Gal-(1-&gt;4)-beta-D-GlcNAc-(1-&gt;2)-alpha-D-Man-(1-&gt;6)]-beta-D-Man-(1-&gt;4)-beta-D-GlcNAc-(1-&gt;4)-beta-D-GlcNAc}-L-asparaginyl-[protein] + UDP-N-acetyl-alpha-D-glucosamine = an N(4)-{beta-D-GlcNAc-(1-&gt;2)-[beta-D-GlcNAc-(1-&gt;4)]-alpha-D-Man-(1-&gt;3)-[beta-D-Gal-(1-&gt;4)-beta-D-GlcNAc-(1-&gt;2)-alpha-D-Man-(1-&gt;6)]-beta-D-Man-(1-&gt;4)-beta-D-GlcNAc-(1-&gt;4)-beta-D-GlcNAc}-L-asparaginyl-[protein] + UDP + H(+). It catalyses the reaction N(4)-{beta-D-GlcNAc-(1-&gt;2)-alpha-D-Man-(1-&gt;3)-[alpha-D-Man-(1-&gt;3)-{alpha-D-Man-(1-&gt;6)}-alpha-D-Man-(1-&gt;6)]-beta-D-Man-(1-&gt;4)-beta-D-GlcNAc-(1-&gt;4)-beta-D-GlcNAc}-asparaginyl-[protein] + UDP-N-acetyl-alpha-D-glucosamine = N(4)-{beta-D-GlcNAc-(1-&gt;2)-[beta-D-GlcNAc-(1-&gt;4)]-alpha-D-Man-(1-&gt;3)-[alpha-D-Man-(1-&gt;3)-{alpha-D-Man-(1-&gt;6)}-alpha-D-Man-(1-&gt;6)]-beta-D-Man-(1-&gt;4)-beta-D-GlcNAc-(1-&gt;4)-beta-D-GlcNAc}-asparaginyl-[protein] + UDP + H(+). It carries out the reaction N(4)-{beta-D-GlcNAc-(1-&gt;2)-alpha-D-Man-(1-&gt;3)-beta-D-Man-(1-&gt;4)-beta-D-GlcNAc-(1-&gt;4)-beta-D-GlcNAc}-asparaginyl-[protein] + UDP-N-acetyl-alpha-D-glucosamine = N(4)-{beta-D-GlcNAc-(1-&gt;2)-[beta-D-GlcNAc-(1-&gt;4)]-alpha-D-Man-(1-&gt;3)-beta-D-Man-(1-&gt;4)-beta-D-GlcNAc-(1-&gt;4)-beta-D-GlcNAc}-asparaginyl-[protein] + UDP + H(+). The protein operates within protein modification; protein glycosylation. Its activity is regulated as follows. Inhibited by UDP. Glycosyltransferase that catalyze the transfer of GlcNAc from UDP-GlcNAc to the GlcNAcbeta1-2Manalpha1-3 arm of the core structure of N-linked glycans through a beta1-4 linkage and participates in the production of tri- and tetra-antennary N-linked sugar chains. Involved in glucose transport by mediating SLC2A2/GLUT2 glycosylation, thereby controlling cell-surface expression of SLC2A2 in pancreatic beta cells. The protein is Alpha-1,3-mannosyl-glycoprotein 4-beta-N-acetylglucosaminyltransferase A of Gallus gallus (Chicken).